The following is a 215-amino-acid chain: MKYELTATEARVIGCLLEKQVTTPEQYPLSVNGVVTACNQKTNREPVMNLTEQEVQEQLDNLVKRHFLRTVSGFGNRVTKYEQRFCNSEFGDLKLSAAEVALVTTLLLRGAQTPGELRSRASRMHEFSDMAEVESTLERLASREDGPYVVRLAREPGKRESRYMHLFCGDVDELSLQTSAPESASGDIQSRVEALESEVAELKQRLDSLLAHLGE.

The protein belongs to the UPF0502 family.

The sequence is that of UPF0502 protein YceH from Salmonella paratyphi C (strain RKS4594).